The following is a 206-amino-acid chain: ATP phosphoribosyltransferase (206 aa).

It belongs to the ATP phosphoribosyltransferase family. Short subfamily. Heteromultimer composed of HisG and HisZ subunits.

The protein localises to the cytoplasm. It carries out the reaction 1-(5-phospho-beta-D-ribosyl)-ATP + diphosphate = 5-phospho-alpha-D-ribose 1-diphosphate + ATP. The protein operates within amino-acid biosynthesis; L-histidine biosynthesis; L-histidine from 5-phospho-alpha-D-ribose 1-diphosphate: step 1/9. Its function is as follows. Catalyzes the condensation of ATP and 5-phosphoribose 1-diphosphate to form N'-(5'-phosphoribosyl)-ATP (PR-ATP). Has a crucial role in the pathway because the rate of histidine biosynthesis seems to be controlled primarily by regulation of HisG enzymatic activity. In Leptospira interrogans serogroup Icterohaemorrhagiae serovar copenhageni (strain Fiocruz L1-130), this protein is ATP phosphoribosyltransferase.